A 270-amino-acid polypeptide reads, in one-letter code: Abhydrolase domain-containing protein C22H12.03 (270 aa).

Residues Pro21–Pro257 form the AB hydrolase-1 domain. Residues Ser95, Glu190, and His250 each act as charge relay system in the active site.

The protein belongs to the AB hydrolase superfamily.

It is found in the mitochondrion. The sequence is that of Abhydrolase domain-containing protein C22H12.03 from Schizosaccharomyces pombe (strain 972 / ATCC 24843) (Fission yeast).